The primary structure comprises 244 residues: Protein TIFY 10b (244 aa).

The region spanning 97–132 (QEPEKRQLTIFYGGKVLVFNDFPADKAKGLMQLASK) is the Tify domain. The disordered stretch occupies residues 174–244 (QKPARANASD…AVVKPIERGQ (71 aa)). Positions 185-210 (PIARKASLHRFLEKRKDRLNAKTPYQ) match the Jas motif. Positions 187–194 (ARKASLHR) match the Nuclear localization signal motif. Basic and acidic residues predominate over residues 194–204 (RFLEKRKDRLN).

It belongs to the TIFY/JAZ family. Interacts with BHLH148. Interacts with COI1A and COI1B in a coronatine-dependent manner. Coronatine is an analog of jasmonoyl isoleucine (JA-Ile). Post-translationally, ubiquitinated. Targeted for degradation by the SCF(COI1) E3 ubiquitin ligase-proteasome pathway during jasmonate signaling.

The protein localises to the nucleus. In terms of biological role, repressor of jasmonate responses. This is Protein TIFY 10b from Oryza sativa subsp. japonica (Rice).